Reading from the N-terminus, the 804-residue chain is Probable cadmium-transporting ATPase (804 aa).

HMA domains follow at residues 11–74 (DKQV…LKVA) and 89–152 (DKNV…LKVI). Residues C22, C25, C100, and C103 each coordinate Cd(2+). The next 5 membrane-spanning stretches (helical) occupy residues 183–203 (STLLFATLLIAFGYLSHFVNG), 207–227 (LVTSMLFVSSIVIGGYSLFKV), 248–268 (IGAAIIGEWAEASIVVILFAI), 413–433 (IIMVIAALVAVVPPLFFGGSW), and 441–461 (LAVLVVGCPCALVITTPISIV). The 4-aspartylphosphate intermediate role is filled by D492. 2 helical membrane-spanning segments follow: residues 749-771 (LNIIKANITFAIGIKIIALLLVI) and 776-798 (TLWIAILSDMGATILVALNSLRL).

This sequence belongs to the cation transport ATPase (P-type) (TC 3.A.3) family. Type IB subfamily.

The protein resides in the cell membrane. It carries out the reaction Cd(2+)(in) + ATP + H2O = Cd(2+)(out) + ADP + phosphate + H(+). In terms of biological role, couples the hydrolysis of ATP with the export of cadmium. Involved in cadmium resistance. This is Probable cadmium-transporting ATPase (cadA) from Staphylococcus aureus.